The sequence spans 387 residues: UDP-Gal:alpha-D-GlcNAc-diphosphoundecaprenol alpha-1,3-galactosyltransferase (387 aa).

Belongs to the glycosyltransferase group 1 family. Glycosyltransferase 4 subfamily. Requires Mg(2+) as cofactor. The cofactor is Mn(2+). Fe(2+) serves as cofactor.

The enzyme catalyses N-acetyl-alpha-D-glucosaminyl-di-trans,octa-cis-undecaprenyl diphosphate + UDP-alpha-D-galactose = alpha-D-Gal-(1-&gt;3)-alpha-D-GlcNAc-di-trans,octa-cis-undecaprenyl diphosphate + UDP + H(+). It functions in the pathway bacterial outer membrane biogenesis; LPS O-antigen biosynthesis. Its function is as follows. Involved in the biosynthesis of the lipopolysaccharide (LPS) O-antigen region. Catalyzes the transfer of galactose from UDP-galactose to GlcNAc-undecaprenyl diphosphate via an alpha1,3-linkage. Has strict substrate specificity. The chain is UDP-Gal:alpha-D-GlcNAc-diphosphoundecaprenol alpha-1,3-galactosyltransferase from Escherichia coli.